We begin with the raw amino-acid sequence, 360 residues long: DNA replication and repair protein RecF (360 aa).

An ATP-binding site is contributed by 33–40; that stretch reads GENGSGKT.

Belongs to the RecF family.

The protein localises to the cytoplasm. Its function is as follows. The RecF protein is involved in DNA metabolism; it is required for DNA replication and normal SOS inducibility. RecF binds preferentially to single-stranded, linear DNA. It also seems to bind ATP. This chain is DNA replication and repair protein RecF, found in Rickettsia canadensis (strain McKiel).